We begin with the raw amino-acid sequence, 284 residues long: Pantothenate synthetase (284 aa).

34 to 41 (MGALHAGH) is an ATP binding site. His-41 acts as the Proton donor in catalysis. Position 65 (Gln-65) interacts with (R)-pantoate. Residue Gln-65 participates in beta-alanine binding. Residue 151–154 (GEKD) participates in ATP binding. Gln-157 contributes to the (R)-pantoate binding site. ATP-binding positions include Leu-180 and 188–191 (MSSR).

The protein belongs to the pantothenate synthetase family. Homodimer.

It is found in the cytoplasm. The enzyme catalyses (R)-pantoate + beta-alanine + ATP = (R)-pantothenate + AMP + diphosphate + H(+). Its pathway is cofactor biosynthesis; (R)-pantothenate biosynthesis; (R)-pantothenate from (R)-pantoate and beta-alanine: step 1/1. Functionally, catalyzes the condensation of pantoate with beta-alanine in an ATP-dependent reaction via a pantoyl-adenylate intermediate. The protein is Pantothenate synthetase of Paramagnetospirillum magneticum (strain ATCC 700264 / AMB-1) (Magnetospirillum magneticum).